A 263-amino-acid chain; its full sequence is Kallikrein 1-related peptidase b24 (263 aa).

The signal sequence occupies residues 1–17 (MWFLILFLALSLGGIDA). A propeptide spans 18 to 24 (APPVQSR) (activation peptide). Residues 25–260 (VVGGFKCEKN…FASWIKDTMA (236 aa)) enclose the Peptidase S1 domain. Cystine bridges form between C31–C175, C50–C66, C154–C221, C186–C200, and C211–C236. The active-site Charge relay system is H65. N-linked (GlcNAc...) asparagine glycans are attached at residues N69 and N105. Residue D122 is the Charge relay system of the active site. N185 is a glycosylation site (N-linked (GlcNAc...) asparagine). S215 serves as the catalytic Charge relay system.

It belongs to the peptidase S1 family. Kallikrein subfamily.

The enzyme catalyses Preferential cleavage of Arg-|-Xaa bonds in small molecule substrates. Highly selective action to release kallidin (lysyl-bradykinin) from kininogen involves hydrolysis of Met-|-Xaa or Leu-|-Xaa.. Functionally, glandular kallikreins cleave Met-Lys and Arg-Ser bonds in kininogen to release Lys-bradykinin. This chain is Kallikrein 1-related peptidase b24 (Klk1b24), found in Mus musculus (Mouse).